The chain runs to 372 residues: Homeobox protein Nkx-2.1 (372 aa).

A DNA-binding region (homeobox) is located at residues R161 to A220. 3 disordered regions span residues Q219–R258, K269–Q288, and A312–G340. Positions S233–G244 are enriched in gly residues. Low complexity predominate over residues C245–Q254. Position 255 is a phosphoserine (S255). The segment covering A273–Q288 has biased composition (low complexity).

It belongs to the NK-2 homeobox family. In terms of assembly, interacts with WWTR1. Phosphorylated on serine residues by STK3/MST2. Thyroid, lung and brain.

Its subcellular location is the nucleus. Functionally, transcription factor that binds and activates the promoter of thyroid specific genes such as thyroglobulin, thyroperoxidase, and thyrotropin receptor. Crucial in the maintenance of the thyroid differentiation phenotype. May play a role in lung development and surfactant homeostasis. Forms a regulatory loop with GRHL2 that coordinates lung epithelial cell morphogenesis and differentiation. Activates the transcription of GNRHR and plays a role in enhancing the circadian oscillation of its gene expression. Represses the transcription of the circadian transcriptional repressor NR1D1. The chain is Homeobox protein Nkx-2.1 from Mus musculus (Mouse).